The primary structure comprises 469 residues: 3-isopropylmalate dehydratase large subunit (469 aa).

Residues Cys-346, Cys-406, and Cys-409 each contribute to the [4Fe-4S] cluster site.

It belongs to the aconitase/IPM isomerase family. LeuC type 1 subfamily. As to quaternary structure, heterodimer of LeuC and LeuD. [4Fe-4S] cluster serves as cofactor.

It carries out the reaction (2R,3S)-3-isopropylmalate = (2S)-2-isopropylmalate. It functions in the pathway amino-acid biosynthesis; L-leucine biosynthesis; L-leucine from 3-methyl-2-oxobutanoate: step 2/4. Catalyzes the isomerization between 2-isopropylmalate and 3-isopropylmalate, via the formation of 2-isopropylmaleate. The polypeptide is 3-isopropylmalate dehydratase large subunit (Lysinibacillus sphaericus (strain C3-41)).